Consider the following 54-residue polypeptide: UPF0391 membrane protein Mpe_A2904 (54 aa).

Helical transmembrane passes span Ala5 to Ala25 and Ile30 to Leu50.

This sequence belongs to the UPF0391 family.

It is found in the cell membrane. This Methylibium petroleiphilum (strain ATCC BAA-1232 / LMG 22953 / PM1) protein is UPF0391 membrane protein Mpe_A2904.